The chain runs to 868 residues: MHELYQPREIEAAAQTFWDEQKSFEVSEQPGKDTFYCLSMFPYPSGKLHMGHVRNYTIGDVISRYQRMLGKNVLQPLGWDAFGMPAENAAIDNNVAPAKWTYENIAYMKNQLKSLGLAVDWSREVTTCKPDYYRWEQWLFTRLFEKGVIYRKNGTVNWDPVDQTVLANEQVIDGRGWRSGALIEKREIPMYYFKITAYADELLESLDELPGWPEQVKTMQRNWIGRSRGMEVQFPYDQASIGEAGALKVFTTRPDTLMGATYVAVAAEHPLATLAAQGNPGLQAFIDECKGGSVAEADVATQEKKGQPTSLFVEHPLTGEKLPVWVANYVLMHYGDGAVMAVPAHDERDFEFATHYGLPIKPVVRTSAGDQTPAPWQPAYGEHGELINSGEFTGLNFQAAFDAIEAALVKKSLGQSRTQFRLRDWGISRQRYWGCPIPIVHCDTCGDVPVPEDQLPVVLPEDVVPDGAGSPLARMPEFYECSCPKCGAPAKRETDTMDTFVESSWYYARYASPHYEGGLVEPNAANHWLPVDQYIGGIEHAILHLLYARFFHKLMRDEGLVTSNEPFKNLLTQGMVNAETYFRMETSGKKTWINPADVTLERDAKAKVISAKLTSDGLPVEIGGTEKMSKSKKNGIDPQTMIDQYGADTCRLFMMFASPPDMSLEWSDSGVEGSHRFLRRVWRLAQAHVAQGASTGLDIAALTDDQKTIRRSIHQAIRQASQDIGQNQKFNTAVAQVMTLMNVLEKAPQVTPQDRALLQEGLETVTLLLAPITPHISHELWTQLGHNEPVIDAGWPAFDANALVQDSLQLVIQVNGKLRGHIEMPASASREEVEAAARINENVLRFTDGLTIRKVIVVPGKLVNIVAS.

The 'HIGH' region motif lies at 42–52; it reads PYPSGKLHMGH. A 'KMSKS' region motif is present at residues 627 to 631; the sequence is KMSKS. Lys630 is a binding site for ATP.

Belongs to the class-I aminoacyl-tRNA synthetase family.

It is found in the cytoplasm. It catalyses the reaction tRNA(Leu) + L-leucine + ATP = L-leucyl-tRNA(Leu) + AMP + diphosphate. In Pseudomonas savastanoi pv. phaseolicola (strain 1448A / Race 6) (Pseudomonas syringae pv. phaseolicola (strain 1448A / Race 6)), this protein is Leucine--tRNA ligase.